Reading from the N-terminus, the 348-residue chain is UPF0283 membrane protein PMI1371 (348 aa).

Transmembrane regions (helical) follow at residues 69 to 89 (LITVASTILGVSVIAQAGQWI) and 99 to 119 (IALGAASAGGLIVIAGMGSVI).

This sequence belongs to the UPF0283 family.

The protein resides in the cell inner membrane. This chain is UPF0283 membrane protein PMI1371, found in Proteus mirabilis (strain HI4320).